The primary structure comprises 341 residues: MNTETRRVTDKRERPLRDLRISVTDRCNFRCTYCMPAELFGPDYPFLQKTELLSFEELERLAKLFVGRFGVEKIRLTGGEPLMRKDMPELIKKLARIPGLKDIAMTTNGSLLPVYAEKLKQAGLHRVTVSLDSLEDERFKAINGRGVSVNKVLEGIEAAKAAGLGVKINMVVQKGVNEKDILPMARYFKEKGHILRFIEFMDVGNTNQWNKKDVITKAEIIDLINQHMPTEPIEANYKGEVASRFRYLDGSGEIGVISSVSDAFCASCNRARLSARGELFTCLFASSGYDVRKLVRGGLTDDELTESIASVWRNRTDQYSIDRALSKTDGKKKVEMSYIGG.

The region spanning 11 to 231 is the Radical SAM core domain; that stretch reads KRERPLRDLR…DLINQHMPTE (221 aa). Arginine 20 serves as a coordination point for GTP. Cysteine 27 and cysteine 31 together coordinate [4Fe-4S] cluster. Tyrosine 33 provides a ligand contact to S-adenosyl-L-methionine. A [4Fe-4S] cluster-binding site is contributed by cysteine 34. Position 75 (arginine 75) interacts with GTP. Glycine 79 serves as a coordination point for S-adenosyl-L-methionine. Threonine 106 is a binding site for GTP. S-adenosyl-L-methionine is bound at residue serine 130. Position 167 (lysine 167) interacts with GTP. Methionine 201 is an S-adenosyl-L-methionine binding site. The [4Fe-4S] cluster site is built by cysteine 265 and cysteine 268. 270–272 is a GTP binding site; sequence RAR. [4Fe-4S] cluster is bound at residue cysteine 282.

Belongs to the radical SAM superfamily. MoaA family. Monomer and homodimer. Requires [4Fe-4S] cluster as cofactor.

It catalyses the reaction GTP + AH2 + S-adenosyl-L-methionine = (8S)-3',8-cyclo-7,8-dihydroguanosine 5'-triphosphate + 5'-deoxyadenosine + L-methionine + A + H(+). Its pathway is cofactor biosynthesis; molybdopterin biosynthesis. In terms of biological role, catalyzes the cyclization of GTP to (8S)-3',8-cyclo-7,8-dihydroguanosine 5'-triphosphate. In Bacillus velezensis (strain DSM 23117 / BGSC 10A6 / LMG 26770 / FZB42) (Bacillus amyloliquefaciens subsp. plantarum), this protein is GTP 3',8-cyclase.